Consider the following 242-residue polypeptide: Ribonuclease 3 2 (242 aa).

The RNase III domain occupies 12-137; that stretch reads LESLVRKLGL…VLGALYLSTS (126 aa). Glu-51 contacts Mg(2+). Asp-55 is an active-site residue. The Mg(2+) site is built by Asp-123 and Glu-126. The active site involves Glu-126. Positions 165–235 constitute a DRBM domain; the sequence is NYKAALQEWT…AKVAFLAITP (71 aa).

The protein belongs to the ribonuclease III family. In terms of assembly, homodimer. Mg(2+) is required as a cofactor.

The protein localises to the cytoplasm. The catalysed reaction is Endonucleolytic cleavage to 5'-phosphomonoester.. Digests double-stranded RNA. Involved in the processing of primary rRNA transcript to yield the immediate precursors to the large and small rRNAs (23S and 16S). Processes some mRNAs, and tRNAs when they are encoded in the rRNA operon. Processes pre-crRNA and tracrRNA of type II CRISPR loci if present in the organism. The sequence is that of Ribonuclease 3 2 (rnc2) from Nostoc sp. (strain PCC 7120 / SAG 25.82 / UTEX 2576).